The sequence spans 728 residues: Ribosome biogenesis protein bop1-A (728 aa).

Residues 1–114 are disordered; it reads MKRGSQGEAG…ENDSSDEEDI (114 aa). Positions 55 to 67 are enriched in acidic residues; the sequence is SDDEEDHWSEEEE. The segment covering 68–77 has biased composition (basic and acidic residues); that stretch reads NPGKSPKEII. 7 WD repeats span residues 393 to 432, 434 to 474, 514 to 556, 559 to 597, 600 to 639, 643 to 682, and 698 to 728; these read GHKDLVRCISVSPSGQWLVSGSDDCSVRFWEVSTGRCMKS, VLEG…RLLC, KHQK…SQNP, KNKGQVQKVLFHPTRPFFFVATQRYVRVYNLLKQELTKK, TNCKWVSSIAVHPAGDNLICGSYDSKLAWFDMDLSTKPYK, HHKKALRAVSFHKSYPLFASGSDDGSVIVCHGMVYNDLLQ, and HRDLGVLDVTFHPTQPWVFSSGADATIRLFT.

Belongs to the WD repeat BOP1/ERB1 family. In terms of assembly, component of the PeBoW complex, composed of bop1, pes1 and wdr12. The complex is held together by bop1, which interacts with pes1 via its N-terminal domain and with wdr12 via a high-affinity interaction between the seven-bladed beta-propeller domains of the 2 proteins. The PeBoW complex associates with the 66S pre-ribosome.

Its subcellular location is the nucleus. It is found in the nucleolus. It localises to the nucleoplasm. Component of the PeBoW complex, which is required for maturation of 28S and 5.8S ribosomal RNAs and formation of the 60S ribosome. This chain is Ribosome biogenesis protein bop1-A (bop1-a), found in Xenopus laevis (African clawed frog).